Here is a 122-residue protein sequence, read N- to C-terminus: Small ribosomal subunit protein uS13 (122 aa).

The disordered stretch occupies residues 92–122 (HRRGLPVRGQRTHTNARTRKGPAKPIAGKKK).

This sequence belongs to the universal ribosomal protein uS13 family. Part of the 30S ribosomal subunit. Forms a loose heterodimer with protein S19. Forms two bridges to the 50S subunit in the 70S ribosome.

Functionally, located at the top of the head of the 30S subunit, it contacts several helices of the 16S rRNA. In the 70S ribosome it contacts the 23S rRNA (bridge B1a) and protein L5 of the 50S subunit (bridge B1b), connecting the 2 subunits; these bridges are implicated in subunit movement. Contacts the tRNAs in the A and P-sites. In Paracoccus denitrificans (strain Pd 1222), this protein is Small ribosomal subunit protein uS13.